Consider the following 207-residue polypeptide: Outer-membrane lipoprotein LolB (207 aa).

The signal sequence occupies residues 1-21 (MPIRKVSLLRLIPLASLVLAA). Residue Cys22 is the site of N-palmitoyl cysteine attachment. The S-diacylglycerol cysteine moiety is linked to residue Cys22.

Belongs to the LolB family. Monomer.

It localises to the cell outer membrane. In terms of biological role, plays a critical role in the incorporation of lipoproteins in the outer membrane after they are released by the LolA protein. This Serratia proteamaculans (strain 568) protein is Outer-membrane lipoprotein LolB.